The primary structure comprises 418 residues: AA14 family lytic polysaccharide monooxygenase B (418 aa).

An N-terminal signal peptide occupies residues 1–18 (MIPVFLAAVAAFLPLTSG). Residues N31, N94, and N151 are each glycosylated (N-linked (GlcNAc...) asparagine). Disulfide bonds link C85–C108, C127–C154, C171–C176, and C178–C200. N-linked (GlcNAc...) asparagine glycosylation is found at N201 and N235. The cysteines at positions 220 and 236 are disulfide-linked. Positions 307-343 (AAATPAPSSSGSSPSSSSPGSSSTASTTSTSGPRPSA) are enriched in low complexity. Positions 307-364 (AAATPAPSSSGSSPSSSSPGSSSTASTTSTSGPRPSARGFRRSTGERPPTGVPTPRKS) are disordered.

Belongs to the polysaccharide monooxygenase AA14 family. It depends on Cu(2+) as a cofactor.

It is found in the secreted. Lytic polysaccharide monooxygenase (LPMO) that oxidatively cleaves xylan with both C1 and C4 regioselectivity and that specifically targets the protective shield made by heteroxylans that cover cellulose microfibrils in wood. Catalysis by LPMOs requires the reduction of the active-site copper from Cu(II) to Cu(I) by a reducing agent and H(2)O(2) or O(2) as a cosubstrate. Cleavage occurs only when xylans are bound to cellulose and not when they are in solution. Increases the efficiency of wood saccharification through oxidative cleavage of highly refractory xylan-coated cellulose fibers via synergistic relationship with xylan-active enzymes, xylobiohydrolases and cellobiohydrolases. The protein is AA14 family lytic polysaccharide monooxygenase B of Trametes coccinea (strain BRFM310) (Pycnoporus coccineus).